Reading from the N-terminus, the 508-residue chain is Photosystem II CP47 reaction center protein (508 aa).

Transmembrane regions (helical) follow at residues Ser21 to Ser36, Ile101 to Trp115, Gly140 to Phe156, Ile203 to Ser218, Val237 to Val252, and Ser457 to Arg472.

It belongs to the PsbB/PsbC family. PsbB subfamily. As to quaternary structure, PSII is composed of 1 copy each of membrane proteins PsbA, PsbB, PsbC, PsbD, PsbE, PsbF, PsbH, PsbI, PsbJ, PsbK, PsbL, PsbM, PsbT, PsbX, PsbY, PsbZ, Psb30/Ycf12, at least 3 peripheral proteins of the oxygen-evolving complex and a large number of cofactors. It forms dimeric complexes. It depends on Binds multiple chlorophylls. PSII binds additional chlorophylls, carotenoids and specific lipids. as a cofactor.

The protein resides in the plastid. The protein localises to the chloroplast thylakoid membrane. In terms of biological role, one of the components of the core complex of photosystem II (PSII). It binds chlorophyll and helps catalyze the primary light-induced photochemical processes of PSII. PSII is a light-driven water:plastoquinone oxidoreductase, using light energy to abstract electrons from H(2)O, generating O(2) and a proton gradient subsequently used for ATP formation. This is Photosystem II CP47 reaction center protein from Vitis vinifera (Grape).